Consider the following 360-residue polypeptide: (+)-6a-hydroxymaackiain 3-O-methyltransferase 2 (360 aa).

S-adenosyl-L-methionine-binding positions include 202-205 (VAGG), Asp226, 226-227 (DQ), 246-247 (DM), and Lys260. The active-site Proton acceptor is His264.

The protein belongs to the class I-like SAM-binding methyltransferase superfamily. Cation-independent O-methyltransferase family. COMT subfamily.

The enzyme catalyses (+)-6a-hydroxymaackiain + S-adenosyl-L-methionine = (+)-pisatin + S-adenosyl-L-homocysteine + H(+). Functionally, 3-O-methyltransferase involved in the phytoalexin pisatin biosynthesis. Can use (+)-6a-hydroxymaackiain, (+)-maackiain and with a lower activity (+)-medicarpin and 2,7,4'-trihydroxyisoflavanone as substrates, but not (-)-6a-hydroxymaackiain, daidzein, formononetin or isoliquiritigenin. The protein is (+)-6a-hydroxymaackiain 3-O-methyltransferase 2 (HMM2) of Pisum sativum (Garden pea).